Consider the following 459-residue polypeptide: tRNA modification GTPase MnmE (459 aa).

Residues Arg-23, Glu-88, and Arg-127 each contribute to the (6S)-5-formyl-5,6,7,8-tetrahydrofolate site. Residues 223–381 (GLNTVIVGKP…FKEVIKELFF (159 aa)) form the TrmE-type G domain. Asn-233 contributes to the K(+) binding site. GTP-binding positions include 233–238 (NVGKSS), 252–258 (TDVPGTT), and 277–280 (DTAG). Ser-237 contributes to the Mg(2+) binding site. 3 residues coordinate K(+): Thr-252, Val-254, and Thr-257. Thr-258 contributes to the Mg(2+) binding site. Lys-459 lines the (6S)-5-formyl-5,6,7,8-tetrahydrofolate pocket.

This sequence belongs to the TRAFAC class TrmE-Era-EngA-EngB-Septin-like GTPase superfamily. TrmE GTPase family. Homodimer. Heterotetramer of two MnmE and two MnmG subunits. It depends on K(+) as a cofactor.

The protein resides in the cytoplasm. Exhibits a very high intrinsic GTPase hydrolysis rate. Involved in the addition of a carboxymethylaminomethyl (cmnm) group at the wobble position (U34) of certain tRNAs, forming tRNA-cmnm(5)s(2)U34. The protein is tRNA modification GTPase MnmE of Clostridium novyi (strain NT).